The primary structure comprises 947 residues: MIKLDWNEYLEKAAEVNAEGAVLLVNNGVLPLDKNAVTQVFGRIQLDYYKSGTGSGGMVNVAKVTGITDGLIEAGAKLNEDVLKAYKDYVAEHPYDYGEGWGGEPWCQEEMPLDDSLVKRAAESSDTAICIIGRTAGEEQDNSCKAGSYLLTDGEKAILRKVRDNFSKMVILLNVGNIIDMGFIDEFSPDAVMYVWQGGMTGGTGTARVLLGEVSPCGKLPDTIAYDITDYPSDKNFHNRDVDIYAEDIFVGYRYFDTFAKDRVRFPFGYGLSYTQFEISAEGRKTDDGVVITAKVKNIGSAAGKEVVQVYLEAPNCKLGKAARVLCGFEKTKVLAPNEEQTLTIEVTERDIASYDDSGITGNAFAWVEEAGEYTFYAGSDVRSAKECFAFTLDSTKVIEQLEQALAPVTPFKRMVRTAEGLSYEDTPLSKVDEAARRLGYLPAETAYTGDKGIALSDVAHGKNTLDEFIAQLDDNDLNCLVRGEGMCSPKVTPGTAAAFGGVAKHLEELGIPAGCCSDGPSGMRLDVGTKAFSLPNGTLIAATFNKSLITELFTYLGLEMRANKVDCLLGPGMNIHRHPLNGRNFEYFSEDPFLTGTMAAAELEGLHSVGVEGTIKHFCANNQETNRHFIDSVASERALREIYLKGFEIAVRKSKARSVMTTYGKVNGLWTAGSFDLNTMILRKQWGFDGFTMTDWWANINDRGCAPDKNNFAAMVRAQNDVYMVCADGESGSDNVIAALADGRLTRAELQRSARNILSFMMSTHAMARKLGEDEAVEVINKPAETVDDGEGDRVFLLDGDLTIDMSGVKTERNLDYSFTVDVAQFGQYRMEMTASSTQSELAQMPVTVFSMGTAWGTFTWNGTGGKPVTFAVEEMPMFSRYTIFRLHFGLGGLDMDKIVFKKIRPAEAQVCRLRISERWLQTQTYFWLKANFQSKKLLRGRRAYR.

Residue aspartate 696 is part of the active site.

Belongs to the glycosyl hydrolase 3 family.

The catalysed reaction is Hydrolysis of terminal, non-reducing beta-D-glucosyl residues with release of beta-D-glucose.. Its pathway is glycan metabolism; cellulose degradation. In Ruminococcus albus, this protein is Beta-glucosidase.